Consider the following 623-residue polypeptide: Sphingomyelinase C 2 (623 aa).

The N-terminal stretch at 1-25 is a signal peptide; sequence MINKITKPKLLIGYYLLLFSLIRCL. Composition is skewed to low complexity over residues 51 to 61 and 67 to 80; these read VNSVSINNDPA and NPAS…NAVP. The tract at residues 51–121 is disordered; the sequence is VNSVSINNDP…DPNPANLASA (71 aa). Over residues 89-102 the composition is skewed to polar residues; it reads NPVNPASANSNQVN. A compositionally biased stretch (low complexity) spans 110–121; it reads PADPNPANLASA.

The protein resides in the secreted. The catalysed reaction is a sphingomyelin + H2O = phosphocholine + an N-acylsphing-4-enine + H(+). In Leptospira interrogans serogroup Icterohaemorrhagiae serovar Lai (strain 56601), this protein is Sphingomyelinase C 2 (sph2).